The primary structure comprises 389 residues: Lipid-A-disaccharide synthase (389 aa).

This sequence belongs to the LpxB family.

It carries out the reaction a lipid X + a UDP-2-N,3-O-bis[(3R)-3-hydroxyacyl]-alpha-D-glucosamine = a lipid A disaccharide + UDP + H(+). It functions in the pathway bacterial outer membrane biogenesis; LPS lipid A biosynthesis. Its function is as follows. Condensation of UDP-2,3-diacylglucosamine and 2,3-diacylglucosamine-1-phosphate to form lipid A disaccharide, a precursor of lipid A, a phosphorylated glycolipid that anchors the lipopolysaccharide to the outer membrane of the cell. This chain is Lipid-A-disaccharide synthase, found in Burkholderia cenocepacia (strain HI2424).